Here is a 1150-residue protein sequence, read N- to C-terminus: DNA polymerase (1150 aa).

The tract at residues 1-53 is disordered; the sequence is MSLVQGHGTSGLFTEPPNPINQQESSGPSLPAQDAAQAFASSPRAGATSTIVN.

This sequence belongs to the DNA polymerase type-B family. As to quaternary structure, heterodimer with the terminal protein; this heterodimer binds to bp 9 to 18 of the genome. Forms a complex with viral pTP, DBP and hosts NFIA and POU2F1/OCT1 for initiation of replication.

It is found in the host nucleus. It catalyses the reaction DNA(n) + a 2'-deoxyribonucleoside 5'-triphosphate = DNA(n+1) + diphosphate. In terms of biological role, eukaryotic-type DNA polymerase involved in viral genomic replication. DNA synthesis is protein primed, and acts in a strand displacement replication. Assembles in complex with viral pTP, DBP, host NFIA and host POU2F1/OCT1 on viral origin of replication. The polymerase covalently transfers dCMP onto pTP, thereby initiating complementary strand synthesis. The polypeptide is DNA polymerase (Canis lupus familiaris (Dog)).